The chain runs to 732 residues: Phosphoribosylformylglycinamidine synthase subunit PurL (732 aa).

His-32 is an active-site residue. Tyr-35 contributes to the ATP binding site. Glu-81 lines the Mg(2+) pocket. Residues 82–85 (SHNH) and Arg-104 each bind substrate. His-83 functions as the Proton acceptor in the catalytic mechanism. Asp-105 contacts Mg(2+). Gln-230 contributes to the substrate binding site. Residue Asp-258 coordinates Mg(2+). 302–304 (ESQ) contacts substrate. 2 residues coordinate ATP: Asp-485 and Gly-522. Residue Asn-523 coordinates Mg(2+). Residue Ser-525 participates in substrate binding.

This sequence belongs to the FGAMS family. In terms of assembly, monomer. Part of the FGAM synthase complex composed of 1 PurL, 1 PurQ and 2 PurS subunits.

Its subcellular location is the cytoplasm. The catalysed reaction is N(2)-formyl-N(1)-(5-phospho-beta-D-ribosyl)glycinamide + L-glutamine + ATP + H2O = 2-formamido-N(1)-(5-O-phospho-beta-D-ribosyl)acetamidine + L-glutamate + ADP + phosphate + H(+). The protein operates within purine metabolism; IMP biosynthesis via de novo pathway; 5-amino-1-(5-phospho-D-ribosyl)imidazole from N(2)-formyl-N(1)-(5-phospho-D-ribosyl)glycinamide: step 1/2. Part of the phosphoribosylformylglycinamidine synthase complex involved in the purines biosynthetic pathway. Catalyzes the ATP-dependent conversion of formylglycinamide ribonucleotide (FGAR) and glutamine to yield formylglycinamidine ribonucleotide (FGAM) and glutamate. The FGAM synthase complex is composed of three subunits. PurQ produces an ammonia molecule by converting glutamine to glutamate. PurL transfers the ammonia molecule to FGAR to form FGAM in an ATP-dependent manner. PurS interacts with PurQ and PurL and is thought to assist in the transfer of the ammonia molecule from PurQ to PurL. The protein is Phosphoribosylformylglycinamidine synthase subunit PurL of Methanococcus aeolicus (strain ATCC BAA-1280 / DSM 17508 / OCM 812 / Nankai-3).